Reading from the N-terminus, the 786-residue chain is Cyclin-F (786 aa).

Residues 20-28 carry the Nuclear localization signal 1 motif; it reads KRRIRRRPR. One can recognise an F-box domain in the interval 29 to 76; sequence NLTILSLPEDVLFHILKWLSVEDILAVRAVHSQLKDLVDNHASVWACA. The 118-residue stretch at 288 to 405 folds into the Cyclin N-terminal domain; it reads QASQAVSKQQ…EIVSALEGKI (118 aa). 4 consecutive short sequence motifs (d box) follow at residues 310–313, 343–346, 349–352, and 351–354; these read RYIL, RRRL, RYRL, and RLQL. Disordered stretches follow at residues 564–593 and 675–738; these read SPSG…TAEL and TQIP…HTQP. The Nuclear localization signal 2 signature appears at 568-574; the sequence is RRTKRKR. The tract at residues 582–766 is PEST; that stretch reads RGSFVTTPTA…ESSVPQQQVK (185 aa). A compositionally biased stretch (low complexity) spans 697 to 714; it reads VTTSGYSSVSTASPTSSV. A compositionally biased stretch (polar residues) spans 723-738; it reads QPTSVLSLDSDSHTQP. The D box 5 signature appears at 767-770; the sequence is RINL.

The protein belongs to the cyclin family. Cyclin AB subfamily. As to quaternary structure, component of the SCF(CCNF) complex consisting of CUL1, RBX1, SKP1 and CCNF. Interacts with SKP1. Interacts with CUL1. Interacts with CCNB1; interaction is required for nuclear localization of CCNB1. Interacts with CCP110; this interaction leads to CCP110 ubiquitination and degradation via the proteasome pathway. Interacts (via the Cyclin N-terminal domain) with MYBL2/BMYB. Interacts with FZR1/CDH1 (via N-terminus). Interacts with RRM2 (via Cy motif and when phosphorylated at 'Thr-33'); the interaction occurs exclusively in G2 and early M. Interacts with CDC6 (via Cy motif); the interaction takes place during G2 and M phase. Degraded when the spindle assembly checkpoint is activated during the G2-M transition. Degradation depends on the C-terminal PEST sequence. In terms of processing, phosphorylated just before cells enter into mitosis. Post-translationally, ubiquitinated by the anaphase-promoting complex (APC/C); leading to its degradation by the proteasome. Widely expressed, with expression detected in the heart, brain, placenta, lung, liver, skeletal muscle, kidney and pancreas.

The protein resides in the nucleus. It is found in the cytoplasm. It localises to the perinuclear region. The protein localises to the cytoskeleton. Its subcellular location is the microtubule organizing center. The protein resides in the centrosome. It is found in the centriole. Functionally, substrate recognition component of a SCF (SKP1-CUL1-F-box protein) E3 ubiquitin-protein ligase complex which mediates the ubiquitination and subsequent proteasomal degradation of target proteins. The SCF(CCNF) E3 ubiquitin-protein ligase complex is an integral component of the ubiquitin proteasome system (UPS) and links proteasome degradation to the cell cycle. Mediates the substrate recognition and the proteasomal degradation of various target proteins involved in the regulation of cell cycle progression and in the maintenance of genome stability. Mediates the ubiquitination and proteasomal degradation of CP110 during G2 phase, thereby acting as an inhibitor of centrosome reduplication. In G2, mediates the ubiquitination and subsequent degradation of ribonucleotide reductase RRM2, thereby maintaining a balanced pool of dNTPs and genome integrity. In G2, mediates the ubiquitination and proteasomal degradation of CDC6, thereby suppressing DNA re-replication and preventing genome instability. Involved in the ubiquitination and degradation of the substrate adapter CDH1 of the anaphase-promoting complex (APC/C), thereby acting as an antagonist of APC/C in regulating G1 progression and S phase entry. May play a role in the G2 cell cycle checkpoint control after DNA damage, possibly by promoting the ubiquitination of MYBL2/BMYB. The protein is Cyclin-F (CCNF) of Homo sapiens (Human).